Reading from the N-terminus, the 743-residue chain is TSL-kinase interacting protein 1 (743 aa).

An SANT domain is found at 53-104; that stretch reads RQWAAWTHQEEESFFTALRQVGKNFEKITSRVQSKNKDQVRHYYYRLVRRMN. Disordered regions lie at residues 486-523 and 626-679; these read SGVH…PGEW and SPKG…TPCG. Residues 488-499 are compositionally biased toward basic and acidic residues; it reads VHDRPARSRDDY.

In terms of assembly, interacts only with active kinase forms of TOUSLED. Interacts with SNL1. Phosphorylated in vitro by TOUSLED. Expressed in flowers, roots and leaves.

It localises to the nucleus. The sequence is that of TSL-kinase interacting protein 1 (TKI1) from Arabidopsis thaliana (Mouse-ear cress).